Here is a 229-residue protein sequence, read N- to C-terminus: MKIGIVGAMAQEVEILKNLMADRTETRVASAVIFEGKINGKDVVLLQSGIGKVAAAIGTTALLQLAKPDLVINTGSAGGVAKGLKVGDIVISDETRYHDADVTAFGYEKGQLPANPAAFLSDKKLADLAQEIAEKQGQSVKRGLICSGDSFINSEDKITQIKADFPNVTGVEMEATAIAQVCYAFNVPFVVVRAISDGGDGKASISFEEFLPLAAKQSSALVLEMIDRL.

The active-site Proton acceptor is Glu12. Substrate is bound by residues Gly78, Ile152, and Met173–Glu174. Asp197 acts as the Proton donor in catalysis.

The protein belongs to the PNP/UDP phosphorylase family. MtnN subfamily.

It catalyses the reaction S-adenosyl-L-homocysteine + H2O = S-(5-deoxy-D-ribos-5-yl)-L-homocysteine + adenine. It carries out the reaction S-methyl-5'-thioadenosine + H2O = 5-(methylsulfanyl)-D-ribose + adenine. The enzyme catalyses 5'-deoxyadenosine + H2O = 5-deoxy-D-ribose + adenine. It participates in amino-acid biosynthesis; L-methionine biosynthesis via salvage pathway; S-methyl-5-thio-alpha-D-ribose 1-phosphate from S-methyl-5'-thioadenosine (hydrolase route): step 1/2. In terms of biological role, catalyzes the irreversible cleavage of the glycosidic bond in both 5'-methylthioadenosine (MTA) and S-adenosylhomocysteine (SAH/AdoHcy) to adenine and the corresponding thioribose, 5'-methylthioribose and S-ribosylhomocysteine, respectively. Also cleaves 5'-deoxyadenosine, a toxic by-product of radical S-adenosylmethionine (SAM) enzymes, into 5-deoxyribose and adenine. The sequence is that of 5'-methylthioadenosine/S-adenosylhomocysteine nucleosidase from Haemophilus influenzae (strain PittEE).